A 522-amino-acid polypeptide reads, in one-letter code: Cytochrome bd-I ubiquinol oxidase subunit 1 (522 aa).

N-formylmethionine is present on Met-1. Over 1-22 (MLDIVELSRLQFALTAMYHFLF) the chain is Cytoplasmic. His-19 contacts heme b. A helical transmembrane segment spans residues 23-42 (VPLTLGMAFLLAIMETVYVL). The Periplasmic segment spans residues 43–94 (SGKQIYKDMTKFWGKLFGINFALGVATGLTMEFQFGTNWSYYSHYVGDIFGA). A helical transmembrane segment spans residues 95 to 114 (PLAIEGLMAFFLESTFVGLF). The Cytoplasmic segment spans residues 115 to 129 (FFGWDRLGKVQHMCV). A helical transmembrane segment spans residues 130–149 (TWLVALGSNLSALWILVANG). The Periplasmic segment spans residues 150–187 (WMQNPIASDFNFETMRMEMVSFSELVLNPVAQVKFVHT). His-186 is a heme b binding site. A helical transmembrane segment spans residues 188 to 207 (VASGYVTGAMFILGISAWYM). Residues 208–219 (LKGRDFAFAKRS) lie on the Cytoplasmic side of the membrane. The chain crosses the membrane as a helical span at residues 220–239 (FAIAASFGMAAVLSVIVLGD). The Periplasmic segment spans residues 240 to 392 (ESGYEMGDVQ…VAPLYFAFRI (153 aa)). Heme b is bound at residue Met-393. A helical membrane pass occupies residues 393–412 (MVACGFLLLAIIALSFWSVI). The Cytoplasmic segment spans residues 413–470 (RNRIGEKKWLLRAALYGIPLPWIAVEAGWFVAEYGRQPWAIGEVLPTAVANSSLTAGD). Residues 471–490 (LIFSMVLICGLYTLFLVAEL) form a helical membrane-spanning segment. The Periplasmic portion of the chain corresponds to 491-522 (FLMFKFARLGPSSLKTGRYHFEQSSTTTQPAR).

The protein belongs to the cytochrome ubiquinol oxidase subunit 1 family. In terms of assembly, heterodimer of subunits I and II. Requires heme b as cofactor. The cofactor is heme d cis-diol.

It is found in the cell inner membrane. It carries out the reaction 2 a ubiquinol + O2(in) + 4 H(+)(in) = 2 a ubiquinone + 2 H2O(in) + 4 H(+)(out). It participates in energy metabolism; oxidative phosphorylation. Functionally, a terminal oxidase that produces a proton motive force by the vectorial transfer of protons across the inner membrane. It is the component of the aerobic respiratory chain of E.coli that predominates when cells are grown at low aeration. Generates a proton motive force using protons and electrons from opposite sides of the membrane to generate H(2)O, transferring 1 proton/electron. This chain is Cytochrome bd-I ubiquinol oxidase subunit 1 (cydA), found in Escherichia coli O6:H1 (strain CFT073 / ATCC 700928 / UPEC).